Reading from the N-terminus, the 150-residue chain is Macrodomain Ter protein (150 aa).

The protein belongs to the MatP family. Homodimer.

The protein localises to the cytoplasm. Required for spatial organization of the terminus region of the chromosome (Ter macrodomain) during the cell cycle. Prevents early segregation of duplicated Ter macrodomains during cell division. Binds specifically to matS, which is a 13 bp signature motif repeated within the Ter macrodomain. This chain is Macrodomain Ter protein, found in Klebsiella pneumoniae (strain 342).